We begin with the raw amino-acid sequence, 156 residues long: Small ribosomal subunit protein uS7 (156 aa).

This sequence belongs to the universal ribosomal protein uS7 family. Part of the 30S ribosomal subunit. Contacts proteins S9 and S11.

Its function is as follows. One of the primary rRNA binding proteins, it binds directly to 16S rRNA where it nucleates assembly of the head domain of the 30S subunit. Is located at the subunit interface close to the decoding center, probably blocks exit of the E-site tRNA. The chain is Small ribosomal subunit protein uS7 from Burkholderia multivorans (strain ATCC 17616 / 249).